We begin with the raw amino-acid sequence, 1230 residues long: Potassium channel subfamily T member 1 (1230 aa).

Residues 1–37 are disordered; the sequence is MARAKLPRSPSEGKAGPGGAPAGAAAPEEPHGLSPLL. Over 1-93 the chain is Cytoplasmic; the sequence is MARAKLPRSP…LFFIKNQRSS (93 aa). A helical transmembrane segment spans residues 94–126; sequence LRIRLFNFSLKLLTCLLYIVRVLLDDPALGIGC. Residues 127–153 lie on the Extracellular side of the membrane; sequence WGCPKQNYSFNDSSSEINWAPILWVER. 2 N-linked (GlcNAc...) asparagine glycosylation sites follow: Asn-133 and Asn-137. Residues 154–178 form a helical membrane-spanning segment; the sequence is KMTLWAIQVIVAIISFLETMLLIYL. The Cytoplasmic segment spans residues 179–192; it reads SYKGNIWEQIFRVS. The chain crosses the membrane as a helical span at residues 193–208; it reads FVLEMINTLPFIITIF. Topologically, residues 209 to 215 are extracellular; that stretch reads WPPLRNL. Residues 216–233 form a helical membrane-spanning segment; the sequence is FIPVFLNCWLAKHALENM. Over 234–246 the chain is Cytoplasmic; it reads INDFHRAILRTQS. Residues 247–274 traverse the membrane as a helical segment; it reads AMFNQVLILFCTLLCLVFTGTCGIQHLE. Residues 275 to 281 lie on the Extracellular side of the membrane; sequence RAGENLS. The segment at residues 282-302 is an intramembrane region (pore-forming); that stretch reads LLTSFYFCIVTFSTVGYGDVT. K(+) contacts are provided by Val-296 and Gly-297. Topologically, residues 303–304 are extracellular; it reads PK. Residues 305 to 338 traverse the membrane as a helical segment; the sequence is IWPSQLLVVIMICVALVVLPLQFEELVYLWMERQ. Residues 339–1230 are Cytoplasmic-facing; it reads KSGGNYSRHR…NPETRDETQL (892 aa). Residues 352–488 enclose the RCK N-terminal 1 domain; it reads EKHVVLCVSS…FHVKFADHVV (137 aa). Na(+)-binding residues include Leu-513, His-516, Ser-538, and Asn-540. The disordered stretch occupies residues 660–689; it reads TEHRPTQSGGGGGGSKLALPTENGSGSRRP. The Zn(2+) site is built by Cys-758 and Cys-759. Arg-761 and Lys-764 together coordinate K(+). Na(+) contacts are provided by Arg-761 and Lys-764. Residues Cys-766 and His-768 each contribute to the Zn(2+) site. Positions 769, 771, 777, and 778 each coordinate K(+). Tyr-771 is a binding site for Na(+). Phe-779 serves as a coordination point for Na(+). The RCK N-terminal 2 domain maps to 781–921; the sequence is NKLIIVSAET…QFRAKDSYSL (141 aa). K(+) contacts are provided by Ser-787, Leu-818, Asp-820, Gly-842, and Asp-865. Disordered stretches follow at residues 1048–1078 and 1204–1230; these read EVKG…EHPL and SSSQ…ETQL. Positions 1057-1072 are enriched in gly residues; that stretch reads AGTGGSSQGRHTGGGD. The segment covering 1204-1219 has biased composition (low complexity); it reads SSSQSRKSSCSHKLSS.

Belongs to the potassium channel family. Calcium-activated (TC 1.A.1.3) subfamily. KCa4.1/KCNT1 sub-subfamily. In terms of assembly, homotetramer; which constitutes the Na(+)-activated K(+) channel. Interacts with KCNT2; these heterodimer channels differ from the homomers in their unitary conductance, kinetic behavior, subcellular localization, and response to activation of protein kinase C. Interacts (via C-terminus) with FMR1; this interaction alters gating properties of KCNT1. Interacts with CRBN via its cytoplasmic C-terminus. In terms of processing, phosphorylated by protein kinase C. Phosphorylation of the C-terminal domain increases channel activity. In terms of tissue distribution, highest expression in liver, brain and spinal cord. Lowest expression in skeletal muscle.

It localises to the cell membrane. It carries out the reaction K(+)(in) = K(+)(out). With respect to regulation, activated by high intracellular Na(+). In addition to activation by Na(+), is cooperatively activated by intracellular Cl(-) levels. Inhibited by Zn(2+). Activated upon stimulation of G-protein coupled receptors, such as CHRM1 and GRIA1. Functionally, sodium-activated K(+) channel. Acts as an important mediator of neuronal membrane excitability. Contributes to the delayed outward currents. Regulates neuronal bursting in sensory neurons. Contributes to synaptic development and plasticity. The sequence is that of Potassium channel subfamily T member 1 from Homo sapiens (Human).